The primary structure comprises 129 residues: uncharacterized protein (129 aa).

Residues 33–50 form a helical membrane-spanning segment; sequence MGGNVMWFIALLFALLIA.

The protein resides in the membrane. This is an uncharacterized protein from Saccharomyces cerevisiae (strain ATCC 204508 / S288c) (Baker's yeast).